The sequence spans 351 residues: Protein Wnt-4 (351 aa).

Positions 1–22 (MSPEYFLRSLLLIILATFSANA) are cleaved as a signal peptide. N-linked (GlcNAc...) asparagine glycosylation is found at Asn-21 and Asn-88. Intrachain disulfides connect Cys-78/Cys-89, Cys-128/Cys-136, Cys-138/Cys-155, Cys-206/Cys-220, Cys-208/Cys-215, Cys-280/Cys-311, Cys-296/Cys-306, Cys-310/Cys-350, Cys-326/Cys-341, Cys-328/Cys-338, and Cys-333/Cys-334. The O-palmitoleoyl serine; by PORCN moiety is linked to residue Ser-212. N-linked (GlcNAc...) asparagine glycosylation is present at Asn-297.

Belongs to the Wnt family. Interacts with CPZ. Palmitoleoylation is required for efficient binding to frizzled receptors. Depalmitoleoylation leads to Wnt signaling pathway inhibition. Predominantly expressed in the diencephalon neuromere D2.

The protein resides in the secreted. Its subcellular location is the extracellular space. It is found in the extracellular matrix. Functionally, ligand for members of the frizzled family of seven transmembrane receptors. Plays an important role in embryonic development. The chain is Protein Wnt-4 (WNT4) from Gallus gallus (Chicken).